A 113-amino-acid polypeptide reads, in one-letter code: uncharacterized protein (113 aa).

The protein to M.jannaschii MJ0886 C-terminal region.

This is an uncharacterized protein from Clostridium pasteurianum.